The primary structure comprises 188 residues: Elongation factor P-like protein (188 aa).

Belongs to the elongation factor P family.

The protein is Elongation factor P-like protein of Vibrio campbellii (strain ATCC BAA-1116).